A 319-amino-acid chain; its full sequence is MSLNFLDFEQPIAELEAKIDSLTAVSRQDEKLDINIDEEVHRLREKSVELTRKIFADLGAWQVAQLARHPQRPYTLDYVRLAFDEFDELAGDRAYADDKAIVGGIARLDGRPVMIIGHQKGRETKEKIRRNFGMPAPEGYRKALRLMEMAERFNMPIITFIDTPGAYPGVGAEERGQSEAIARNLREMSRLSVPVICTVIGEGGSGGALAIGVGDKVNMLQYSTYSVISPEGCASILWKSADKAPLAAEAMGIIAPRLKELKLIDSIIQEPLGGAHRNPEAMAASLKAQLLADLADLDVLSKDDLKNRRYQRLMSYGYA.

A CoA carboxyltransferase C-terminal domain is found at 35–296 (NIDEEVHRLR…KAQLLADLAD (262 aa)).

Belongs to the AccA family. In terms of assembly, acetyl-CoA carboxylase is a heterohexamer composed of biotin carboxyl carrier protein (AccB), biotin carboxylase (AccC) and two subunits each of ACCase subunit alpha (AccA) and ACCase subunit beta (AccD).

The protein localises to the cytoplasm. It catalyses the reaction N(6)-carboxybiotinyl-L-lysyl-[protein] + acetyl-CoA = N(6)-biotinyl-L-lysyl-[protein] + malonyl-CoA. It participates in lipid metabolism; malonyl-CoA biosynthesis; malonyl-CoA from acetyl-CoA: step 1/1. Its function is as follows. Component of the acetyl coenzyme A carboxylase (ACC) complex. First, biotin carboxylase catalyzes the carboxylation of biotin on its carrier protein (BCCP) and then the CO(2) group is transferred by the carboxyltransferase to acetyl-CoA to form malonyl-CoA. This is Acetyl-coenzyme A carboxylase carboxyl transferase subunit alpha from Citrobacter koseri (strain ATCC BAA-895 / CDC 4225-83 / SGSC4696).